We begin with the raw amino-acid sequence, 876 residues long: Leucine--tRNA ligase (876 aa).

A 'HIGH' region motif is present at residues 43–53 (PYPSGRIHMGH). The short motif at 632–636 (KMSKS) is the 'KMSKS' region element. K635 contributes to the ATP binding site.

The protein belongs to the class-I aminoacyl-tRNA synthetase family.

It is found in the cytoplasm. It catalyses the reaction tRNA(Leu) + L-leucine + ATP = L-leucyl-tRNA(Leu) + AMP + diphosphate. In Agrobacterium fabrum (strain C58 / ATCC 33970) (Agrobacterium tumefaciens (strain C58)), this protein is Leucine--tRNA ligase.